A 216-amino-acid polypeptide reads, in one-letter code: Chaperone protein TorD (216 aa).

It belongs to the TorD/DmsD family. TorD subfamily.

The protein localises to the cytoplasm. Involved in the biogenesis of TorA. Acts on TorA before the insertion of the molybdenum cofactor and, as a result, probably favors a conformation of the apoenzyme that is competent for acquiring the cofactor. This chain is Chaperone protein TorD, found in Photobacterium profundum (strain SS9).